A 431-amino-acid chain; its full sequence is Light-independent protochlorophyllide reductase subunit N (431 aa).

Residues cysteine 29, cysteine 54, and cysteine 114 each coordinate [4Fe-4S] cluster.

The protein belongs to the BchN/ChlN family. Protochlorophyllide reductase is composed of three subunits; ChlL, ChlN and ChlB. Forms a heterotetramer of two ChlB and two ChlN subunits. [4Fe-4S] cluster serves as cofactor.

Its subcellular location is the plastid. It is found in the chloroplast. The catalysed reaction is chlorophyllide a + oxidized 2[4Fe-4S]-[ferredoxin] + 2 ADP + 2 phosphate = protochlorophyllide a + reduced 2[4Fe-4S]-[ferredoxin] + 2 ATP + 2 H2O. It functions in the pathway porphyrin-containing compound metabolism; chlorophyll biosynthesis (light-independent). Its function is as follows. Component of the dark-operative protochlorophyllide reductase (DPOR) that uses Mg-ATP and reduced ferredoxin to reduce ring D of protochlorophyllide (Pchlide) to form chlorophyllide a (Chlide). This reaction is light-independent. The NB-protein (ChlN-ChlB) is the catalytic component of the complex. The chain is Light-independent protochlorophyllide reductase subunit N from Nephroselmis olivacea (Green alga).